The chain runs to 147 residues: 3-hydroxyacyl-[acyl-carrier-protein] dehydratase FabZ (147 aa).

His-49 is an active-site residue.

This sequence belongs to the thioester dehydratase family. FabZ subfamily.

Its subcellular location is the cytoplasm. It catalyses the reaction a (3R)-hydroxyacyl-[ACP] = a (2E)-enoyl-[ACP] + H2O. In terms of biological role, involved in unsaturated fatty acids biosynthesis. Catalyzes the dehydration of short chain beta-hydroxyacyl-ACPs and long chain saturated and unsaturated beta-hydroxyacyl-ACPs. This Alkaliphilus metalliredigens (strain QYMF) protein is 3-hydroxyacyl-[acyl-carrier-protein] dehydratase FabZ.